A 205-amino-acid chain; its full sequence is Holliday junction branch migration complex subunit RuvA (205 aa).

The interval 1–64 is domain I; it reads MIGKLKGVVD…EDMIRLYGFR (64 aa). The segment at 65 to 143 is domain II; the sequence is SDAEREWFRL…AFAPVDPALV (79 aa). Positions 144-152 are flexible linker; that stretch reads RLAGAVEAR. A domain III region spans residues 153 to 205; it reads TAPQPVADAISALVNLGYPQAQASAAVAAALQSAGAEAEAKTLIRLGLRELAR.

This sequence belongs to the RuvA family. In terms of assembly, homotetramer. Forms an RuvA(8)-RuvB(12)-Holliday junction (HJ) complex. HJ DNA is sandwiched between 2 RuvA tetramers; dsDNA enters through RuvA and exits via RuvB. An RuvB hexamer assembles on each DNA strand where it exits the tetramer. Each RuvB hexamer is contacted by two RuvA subunits (via domain III) on 2 adjacent RuvB subunits; this complex drives branch migration. In the full resolvosome a probable DNA-RuvA(4)-RuvB(12)-RuvC(2) complex forms which resolves the HJ.

Its subcellular location is the cytoplasm. In terms of biological role, the RuvA-RuvB-RuvC complex processes Holliday junction (HJ) DNA during genetic recombination and DNA repair, while the RuvA-RuvB complex plays an important role in the rescue of blocked DNA replication forks via replication fork reversal (RFR). RuvA specifically binds to HJ cruciform DNA, conferring on it an open structure. The RuvB hexamer acts as an ATP-dependent pump, pulling dsDNA into and through the RuvAB complex. HJ branch migration allows RuvC to scan DNA until it finds its consensus sequence, where it cleaves and resolves the cruciform DNA. The sequence is that of Holliday junction branch migration complex subunit RuvA from Methylobacterium sp. (strain 4-46).